Reading from the N-terminus, the 133-residue chain is Ribosome-binding factor A (133 aa).

The protein belongs to the RbfA family. As to quaternary structure, monomer. Binds 30S ribosomal subunits, but not 50S ribosomal subunits or 70S ribosomes.

It is found in the cytoplasm. One of several proteins that assist in the late maturation steps of the functional core of the 30S ribosomal subunit. Associates with free 30S ribosomal subunits (but not with 30S subunits that are part of 70S ribosomes or polysomes). Required for efficient processing of 16S rRNA. May interact with the 5'-terminal helix region of 16S rRNA. This Pseudomonas fluorescens (strain Pf0-1) protein is Ribosome-binding factor A.